Reading from the N-terminus, the 183-residue chain is Segregation and condensation protein B (183 aa).

The protein belongs to the ScpB family. As to quaternary structure, homodimer. Homodimerization may be required to stabilize the binding of ScpA to the Smc head domains. Component of a cohesin-like complex composed of ScpA, ScpB and the Smc homodimer, in which ScpA and ScpB bind to the head domain of Smc. The presence of the three proteins is required for the association of the complex with DNA.

It is found in the cytoplasm. Its function is as follows. Participates in chromosomal partition during cell division. May act via the formation of a condensin-like complex containing Smc and ScpA that pull DNA away from mid-cell into both cell halves. The polypeptide is Segregation and condensation protein B (Streptococcus pyogenes serotype M12 (strain MGAS2096)).